A 234-amino-acid polypeptide reads, in one-letter code: Cyclin-J18 (234 aa).

The protein belongs to the cyclin family.

This chain is Cyclin-J18 (CYCJ18), found in Arabidopsis thaliana (Mouse-ear cress).